The sequence spans 500 residues: Citrate lyase alpha chain (500 aa).

Oligomer with a subunit composition of (alpha,beta,gamma)6.

It localises to the cytoplasm. It carries out the reaction citrate = oxaloacetate + acetate. It catalyses the reaction citrate + acetyl-CoA = (3S)-citryl-CoA + acetate. Its function is as follows. Represents a citrate:acetyl-ACP transferase. The sequence is that of Citrate lyase alpha chain (citF) from Haemophilus influenzae (strain ATCC 51907 / DSM 11121 / KW20 / Rd).